The chain runs to 387 residues: Probable peptidoglycan glycosyltransferase FtsW (387 aa).

The next 9 membrane-spanning stretches (helical) occupy residues 20 to 40, 61 to 81, 86 to 106, 149 to 169, 172 to 192, 194 to 214, 284 to 304, 322 to 342, and 349 to 369; these read LYLL…VGSA, LFLL…LAFW, PVML…GIGV, TIRG…LLLL, DFGA…LGGA, LWHF…LAWY, LMGS…VLLI, GLGI…MGVL, and LPLM…VALI.

Belongs to the SEDS family. FtsW subfamily.

Its subcellular location is the cell inner membrane. The catalysed reaction is [GlcNAc-(1-&gt;4)-Mur2Ac(oyl-L-Ala-gamma-D-Glu-L-Lys-D-Ala-D-Ala)](n)-di-trans,octa-cis-undecaprenyl diphosphate + beta-D-GlcNAc-(1-&gt;4)-Mur2Ac(oyl-L-Ala-gamma-D-Glu-L-Lys-D-Ala-D-Ala)-di-trans,octa-cis-undecaprenyl diphosphate = [GlcNAc-(1-&gt;4)-Mur2Ac(oyl-L-Ala-gamma-D-Glu-L-Lys-D-Ala-D-Ala)](n+1)-di-trans,octa-cis-undecaprenyl diphosphate + di-trans,octa-cis-undecaprenyl diphosphate + H(+). It participates in cell wall biogenesis; peptidoglycan biosynthesis. Peptidoglycan polymerase that is essential for cell division. The polypeptide is Probable peptidoglycan glycosyltransferase FtsW (Nitrosococcus halophilus (strain Nc4)).